Reading from the N-terminus, the 224-residue chain is UPF0758 protein Sde_3678 (224 aa).

The 123-residue stretch at 102 to 224 (SLTSTTAVKQ…AVSFAERGWI (123 aa)) folds into the MPN domain. Zn(2+) contacts are provided by histidine 173, histidine 175, and aspartate 186. The JAMM motif motif lies at 173–186 (HNHPSGIAEPSEPD).

The protein belongs to the UPF0758 family.

The chain is UPF0758 protein Sde_3678 from Saccharophagus degradans (strain 2-40 / ATCC 43961 / DSM 17024).